A 255-amino-acid chain; its full sequence is Small ribosomal subunit protein eS1A (255 aa).

Residues 1–18 (MAVGKNKRLSKGKKGQKK) are compositionally biased toward basic residues. The tract at residues 1-20 (MAVGKNKRLSKGKKGQKKRV) is disordered. N-acetylalanine; partial is present on alanine 2. Threonine 245 bears the Phosphothreonine mark. Residue lysine 248 forms a Glycyl lysine isopeptide (Lys-Gly) (interchain with G-Cter in ubiquitin) linkage. Phosphothreonine is present on threonine 254.

It belongs to the eukaryotic ribosomal protein eS1 family. In terms of assembly, component of the small ribosomal subunit. Mature ribosomes consist of a small (40S) and a large (60S) subunit. The 40S subunit contains about 33 different proteins and 1 molecule of RNA (18S). The 60S subunit contains about 49 different proteins and 3 molecules of RNA (25S, 5.8S and 5S).

The protein resides in the cytoplasm. In Saccharomyces cerevisiae (strain RM11-1a) (Baker's yeast), this protein is Small ribosomal subunit protein eS1A.